A 1439-amino-acid polypeptide reads, in one-letter code: Gag-Pol polyprotein (1439 aa).

The N-myristoyl glycine; by host moiety is linked to residue Gly-2. The segment at 7 to 31 (ILRGEKLDAWEKIKLRPGGKKHYML) is interaction with Gp41. An interaction with host CALM1 region spans residues 8 to 43 (LRGEKLDAWEKIKLRPGGKKHYMLKHLVWANRELEK). The interval 12–19 (KLDAWEKI) is interaction with host AP3D1. The interaction with membrane phosphatidylinositol 4,5-bisphosphate and RNA stretch occupies residues 14–33 (DAWEKIKLRPGGKKHYMLKH). Positions 16–22 (WEKIKLR) match the Nuclear export signal motif. Positions 26–32 (KKHYMLK) match the Nuclear localization signal motif. An interaction with membrane phosphatidylinositol 4,5-bisphosphate region spans residues 73 to 77 (EELKS). The disordered stretch occupies residues 105-128 (EEEQNESQQKTQQAGAADRGKDSQ). The residue at position 130 (Tyr-130) is a Phosphotyrosine; by host. The interaction with human PPIA/CYPA and NUP153 stretch occupies residues 187 to 225 (NTVGGHQAAMQMLKDTINEEAAEWDRLHPVHAGPVAPGQ). The tract at residues 275 to 361 (YSPVSILDIK…GGPAHKARVL (87 aa)) is dimerization/Multimerization of capsid protein p24. CCHC-type zinc fingers lie at residues 387–404 (IKCFNCGKEGHLARNCRA) and 408–425 (KGCWKCGKEGHQMKDCTE). The segment at 441-485 (KAREFPSEQTRANSPTRESQTRANSPTTRELQVRGSNTFSEAGAE) is disordered. A compositionally biased stretch (polar residues) spans 447–480 (SEQTRANSPTRESQTRANSPTTRELQVRGSNTFS). Positions 493 to 497 (PQITL) are dimerization of protease. Residues 512-581 (KEALLDTGAD…TPVNIIGRNM (70 aa)) enclose the Peptidase A2 domain. Asp-517 serves as the catalytic For protease activity; shared with dimeric partner. Dimerization of protease stretches follow at residues 541–547 (GIGGFIK) and 580–592 (NMLTQLGRTLNFP). A Reverse transcriptase domain is found at 635-825 (EGKISRIGPE…PPFLWMGYEL (191 aa)). Residues Asp-701, Asp-776, and Asp-777 each coordinate Mg(2+). The RT 'primer grip' stretch occupies residues 818 to 826 (FLWMGYELH). The Tryptophan repeat motif motif lies at 989-1005 (WEAWWTDYWQATWIPEW). The region spanning 1025-1148 (IAGVETFYVD…VDKLVSSGIR (124 aa)) is the RNase H type-1 domain. Residues Asp-1034, Glu-1069, Asp-1089, and Asp-1140 each contribute to the Mg(2+) site. The Integrase-type zinc-finger motif lies at 1154 to 1195 (DGIDKAQEEHEKYHSNWRAMANEFNIPPVVPKEIVACCDKCQ). His-1163, His-1167, Cys-1191, and Cys-1194 together coordinate Zn(2+). The 151-residue stretch at 1205–1355 (VNCSPGIWQL…SAGERIIDII (151 aa)) folds into the Integrase catalytic domain. Mg(2+)-binding residues include Asp-1215, Asp-1267, and Glu-1303. The integrase-type DNA-binding region spans 1374-1421 (FRVYYRDSRDPIWKGPAKLLWKGEGAVVIQDNSDIKVVPRRKAKIIRD).

Homotrimer; further assembles as hexamers of trimers. Interacts with gp41 (via C-terminus). Interacts with host CALM1; this interaction induces a conformational change in the Matrix protein, triggering exposure of the myristate group. Interacts with host AP3D1; this interaction allows the polyprotein trafficking to multivesicular bodies during virus assembly. Part of the pre-integration complex (PIC) which is composed of viral genome, matrix protein, Vpr and integrase. As to quaternary structure, homodimer; the homodimer further multimerizes as homohexamers or homopentamers. Interacts with human PPIA/CYPA; This interaction stabilizes the capsid. Interacts with human NUP153. Interacts with host PDZD8; this interaction stabilizes the capsid. Interacts with monkey TRIM5; this interaction destabilizes the capsid. In terms of assembly, homodimer, whose active site consists of two apposed aspartic acid residues. Heterodimer of p66 RT and p51 RT (RT p66/p51). Heterodimerization of RT is essential for DNA polymerase activity. The overall folding of the subdomains is similar in p66 RT and p51 RT but the spatial arrangements of the subdomains are dramatically different. As to quaternary structure, homotetramer; may further associate as a homohexadecamer. Part of the pre-integration complex (PIC) which is composed of viral genome, matrix protein, Vpr and integrase. Interacts with human SMARCB1/INI1 and human PSIP1/LEDGF isoform 1. Interacts with human KPNA3; this interaction might play a role in nuclear import of the pre-integration complex. Interacts with human NUP153; this interaction might play a role in nuclear import of the pre-integration complex. The cofactor is Mg(2+). Specific enzymatic cleavages by the viral protease yield mature proteins. The protease is released by autocatalytic cleavage. The polyprotein is cleaved during and after budding, this process is termed maturation. Proteolytic cleavage of p66 RT removes the RNase H domain to yield the p51 RT subunit. Nucleocapsid protein p7 might be further cleaved after virus entry. Post-translationally, tyrosine phosphorylated presumably in the virion by a host kinase. Phosphorylation is apparently not a major regulator of membrane association. In terms of processing, phosphorylated possibly by host MAPK1; this phosphorylation is necessary for Pin1-mediated virion uncoating. Methylated by host PRMT6, impairing its function by reducing RNA annealing and the initiation of reverse transcription.

The protein localises to the host cell membrane. Its subcellular location is the host endosome. It localises to the host multivesicular body. It is found in the virion membrane. The protein resides in the host nucleus. The protein localises to the host cytoplasm. Its subcellular location is the virion. The enzyme catalyses Specific for a P1 residue that is hydrophobic, and P1' variable, but often Pro.. It catalyses the reaction Endohydrolysis of RNA in RNA/DNA hybrids. Three different cleavage modes: 1. sequence-specific internal cleavage of RNA. Human immunodeficiency virus type 1 and Moloney murine leukemia virus enzymes prefer to cleave the RNA strand one nucleotide away from the RNA-DNA junction. 2. RNA 5'-end directed cleavage 13-19 nucleotides from the RNA end. 3. DNA 3'-end directed cleavage 15-20 nucleotides away from the primer terminus.. It carries out the reaction 3'-end directed exonucleolytic cleavage of viral RNA-DNA hybrid.. The catalysed reaction is DNA(n) + a 2'-deoxyribonucleoside 5'-triphosphate = DNA(n+1) + diphosphate. Protease: The viral protease is inhibited by many synthetic protease inhibitors (PIs), such as amprenavir, atazanavir, indinavir, loprinavir, nelfinavir, ritonavir and saquinavir. Use of protease inhibitors in tritherapy regimens permit more ambitious therapeutic strategies. Reverse transcriptase/ribonuclease H: RT can be inhibited either by nucleoside RT inhibitors (NRTIs) or by non nucleoside RT inhibitors (NNRTIs). NRTIs act as chain terminators, whereas NNRTIs inhibit DNA polymerization by binding a small hydrophobic pocket near the RT active site and inducing an allosteric change in this region. Classical NRTIs are abacavir, adefovir (PMEA), didanosine (ddI), lamivudine (3TC), stavudine (d4T), tenofovir (PMPA), zalcitabine (ddC), and zidovudine (AZT). Classical NNRTIs are atevirdine (BHAP U-87201E), delavirdine, efavirenz (DMP-266), emivirine (I-EBU), and nevirapine (BI-RG-587). The tritherapies used as a basic effective treatment of AIDS associate two NRTIs and one NNRTI. Mediates, with Gag polyprotein, the essential events in virion assembly, including binding the plasma membrane, making the protein-protein interactions necessary to create spherical particles, recruiting the viral Env proteins, and packaging the genomic RNA via direct interactions with the RNA packaging sequence (Psi). Gag-Pol polyprotein may regulate its own translation, by the binding genomic RNA in the 5'-UTR. At low concentration, the polyprotein would promote translation, whereas at high concentration, the polyprotein would encapsidate genomic RNA and then shut off translation. Its function is as follows. Targets the polyprotein to the plasma membrane via a multipartite membrane-binding signal, that includes its myristoylated N-terminus. Matrix protein is part of the pre-integration complex. Implicated in the release from host cell mediated by Vpu. Binds to RNA. Functionally, forms the conical core that encapsulates the genomic RNA-nucleocapsid complex in the virion. Most core are conical, with only 7% tubular. The core is constituted by capsid protein hexamer subunits. The core is disassembled soon after virion entry. Host restriction factors such as TRIM5-alpha or TRIMCyp bind retroviral capsids and cause premature capsid disassembly, leading to blocks in reverse transcription. Capsid restriction by TRIM5 is one of the factors which restricts HIV-1 to the human species. Host PIN1 apparently facilitates the virion uncoating. On the other hand, interactions with PDZD8 or CYPA stabilize the capsid. In terms of biological role, encapsulates and protects viral dimeric unspliced genomic RNA (gRNA). Binds these RNAs through its zinc fingers. Acts as a nucleic acid chaperone which is involved in rearangement of nucleic acid secondary structure during gRNA retrotranscription. Also facilitates template switch leading to recombination. As part of the polyprotein, participates in gRNA dimerization, packaging, tRNA incorporation and virion assembly. Aspartyl protease that mediates proteolytic cleavages of Gag and Gag-Pol polyproteins during or shortly after the release of the virion from the plasma membrane. Cleavages take place as an ordered, step-wise cascade to yield mature proteins. This process is called maturation. Displays maximal activity during the budding process just prior to particle release from the cell. Also cleaves Nef and Vif, probably concomitantly with viral structural proteins on maturation of virus particles. Hydrolyzes host EIF4GI and PABP1 in order to shut off the capped cellular mRNA translation. The resulting inhibition of cellular protein synthesis serves to ensure maximal viral gene expression and to evade host immune response. Also mediates cleavage of host YTHDF3. Mediates cleavage of host CARD8, thereby activating the CARD8 inflammasome, leading to the clearance of latent HIV-1 in patient CD4(+) T-cells after viral reactivation; in contrast, HIV-1 can evade CARD8-sensing when its protease remains inactive in infected cells prior to viral budding. Its function is as follows. Multifunctional enzyme that converts the viral RNA genome into dsDNA in the cytoplasm, shortly after virus entry into the cell. This enzyme displays a DNA polymerase activity that can copy either DNA or RNA templates, and a ribonuclease H (RNase H) activity that cleaves the RNA strand of RNA-DNA heteroduplexes in a partially processive 3' to 5' endonucleasic mode. Conversion of viral genomic RNA into dsDNA requires many steps. A tRNA(3)-Lys binds to the primer-binding site (PBS) situated at the 5'-end of the viral RNA. RT uses the 3' end of the tRNA primer to perform a short round of RNA-dependent minus-strand DNA synthesis. The reading proceeds through the U5 region and ends after the repeated (R) region which is present at both ends of viral RNA. The portion of the RNA-DNA heteroduplex is digested by the RNase H, resulting in a ssDNA product attached to the tRNA primer. This ssDNA/tRNA hybridizes with the identical R region situated at the 3' end of viral RNA. This template exchange, known as minus-strand DNA strong stop transfer, can be either intra- or intermolecular. RT uses the 3' end of this newly synthesized short ssDNA to perform the RNA-dependent minus-strand DNA synthesis of the whole template. RNase H digests the RNA template except for two polypurine tracts (PPTs) situated at the 5'-end and near the center of the genome. It is not clear if both polymerase and RNase H activities are simultaneous. RNase H probably can proceed both in a polymerase-dependent (RNA cut into small fragments by the same RT performing DNA synthesis) and a polymerase-independent mode (cleavage of remaining RNA fragments by free RTs). Secondly, RT performs DNA-directed plus-strand DNA synthesis using the PPTs that have not been removed by RNase H as primers. PPTs and tRNA primers are then removed by RNase H. The 3' and 5' ssDNA PBS regions hybridize to form a circular dsDNA intermediate. Strand displacement synthesis by RT to the PBS and PPT ends produces a blunt ended, linear dsDNA copy of the viral genome that includes long terminal repeats (LTRs) at both ends. Functionally, catalyzes viral DNA integration into the host chromosome, by performing a series of DNA cutting and joining reactions. This enzyme activity takes place after virion entry into a cell and reverse transcription of the RNA genome in dsDNA. The first step in the integration process is 3' processing. This step requires a complex comprising the viral genome, matrix protein, Vpr and integrase. This complex is called the pre-integration complex (PIC). The integrase protein removes 2 nucleotides from each 3' end of the viral DNA, leaving recessed CA OH's at the 3' ends. In the second step, the PIC enters cell nucleus. This process is mediated through integrase and Vpr proteins, and allows the virus to infect a non dividing cell. This ability to enter the nucleus is specific of lentiviruses, other retroviruses cannot and rely on cell division to access cell chromosomes. In the third step, termed strand transfer, the integrase protein joins the previously processed 3' ends to the 5' ends of strands of target cellular DNA at the site of integration. The 5'-ends are produced by integrase-catalyzed staggered cuts, 5 bp apart. A Y-shaped, gapped, recombination intermediate results, with the 5'-ends of the viral DNA strands and the 3' ends of target DNA strands remaining unjoined, flanking a gap of 5 bp. The last step is viral DNA integration into host chromosome. This involves host DNA repair synthesis in which the 5 bp gaps between the unjoined strands are filled in and then ligated. Since this process occurs at both cuts flanking the HIV genome, a 5 bp duplication of host DNA is produced at the ends of HIV-1 integration. Alternatively, Integrase may catalyze the excision of viral DNA just after strand transfer, this is termed disintegration. This Human immunodeficiency virus type 1 group M subtype C (isolate ETH2220) (HIV-1) protein is Gag-Pol polyprotein (gag-pol).